We begin with the raw amino-acid sequence, 409 residues long: Peptidase T (409 aa).

His78 is a Zn(2+) binding site. Asp80 is an active-site residue. Residue Asp140 coordinates Zn(2+). Glu173 acts as the Proton acceptor in catalysis. Residues Glu174, Asp196, and His379 each coordinate Zn(2+).

Belongs to the peptidase M20B family. It depends on Zn(2+) as a cofactor.

It localises to the cytoplasm. The enzyme catalyses Release of the N-terminal residue from a tripeptide.. In terms of biological role, cleaves the N-terminal amino acid of tripeptides. This chain is Peptidase T, found in Serratia proteamaculans (strain 568).